We begin with the raw amino-acid sequence, 559 residues long: Cytoplasmic polyadenylation element-binding protein 1 (559 aa).

Positions 222–243 are disordered; that stretch reads SRMDHSSSPLTPPPSASPSGSL. RRM domains follow at residues 304 to 401 and 423 to 504; these read CKVF…DAQV and NTVF…PYLE. Cys-508, Cys-511, Cys-520, Cys-525, Cys-530, Cys-533, His-538, and His-546 together coordinate Zn(2+).

It belongs to the RRM CPEB family. In terms of tissue distribution, expressed in oocytes (at protein level). During oocyte maturation becomes detectable at stage Ib, and remains ubiquitously distributed within the oocyte cytoplasm until stage II. It then follows a gradual accumulation to the future animal pole during stage III, and remains localized to this pole at stage IV (at protein level). Expressed in oocytes, blastomeres and pre-mid-blastula transition embryos. Its expression during oogenesis is ubiquitous at stages I and II, but gradually accumulated at the periphery of the oocyte in the presumptive animal pole during stage III. Expression was maintained in that region at stage IV, and then became delocalized at stage V to cover a much broader area presumably encompassing the future blastodisc.

It localises to the cytoplasm. Functionally, sequence-specific RNA-binding protein that regulates mRNA cytoplasmic polyadenylation and translation initiation during oocyte maturation and early development. Binds to the cytoplasmic polyadenylation element (CPE), an uridine-rich sequence element (consensus sequence 5'-UUUUUAU-3') within the mRNA 3'-UTR. This is Cytoplasmic polyadenylation element-binding protein 1 (cpeb1) from Danio rerio (Zebrafish).